We begin with the raw amino-acid sequence, 473 residues long: Ribulose bisphosphate carboxylase large chain 2 (473 aa).

The substrate site is built by N116 and T166. Residue K168 is the Proton acceptor of the active site. K170 lines the substrate pocket. 3 residues coordinate Mg(2+): K194, D196, and E197. K194 is modified (N6-carboxylysine). The Proton acceptor role is filled by H287. Substrate is bound by residues R288, H320, and S372.

This sequence belongs to the RuBisCO large chain family. Type I subfamily. Heterohexadecamer of 8 large chains and 8 small chains. It depends on Mg(2+) as a cofactor.

It carries out the reaction 2 (2R)-3-phosphoglycerate + 2 H(+) = D-ribulose 1,5-bisphosphate + CO2 + H2O. It catalyses the reaction D-ribulose 1,5-bisphosphate + O2 = 2-phosphoglycolate + (2R)-3-phosphoglycerate + 2 H(+). Its function is as follows. RuBisCO catalyzes two reactions: the carboxylation of D-ribulose 1,5-bisphosphate, the primary event in carbon dioxide fixation, as well as the oxidative fragmentation of the pentose substrate. Both reactions occur simultaneously and in competition at the same active site. This chain is Ribulose bisphosphate carboxylase large chain 2, found in Acidithiobacillus ferrooxidans (Thiobacillus ferrooxidans).